Reading from the N-terminus, the 648-residue chain is Macrolide export ATP-binding/permease protein MacB (648 aa).

Positions 6–251 (IRVRGVSRAF…GPSAGWRGAI (246 aa)) constitute an ABC transporter domain. Position 42 to 49 (42 to 49 (GASGSGKS)) interacts with ATP. 4 consecutive transmembrane segments (helical) span residues 273–293 (LLTM…SALG), 528–548 (VAVI…LVSV), 572–592 (FLIE…MLAL), and 613–633 (SIIV…FLPA).

The protein belongs to the ABC transporter superfamily. Macrolide exporter (TC 3.A.1.122) family. As to quaternary structure, homodimer.

It is found in the cell inner membrane. In terms of biological role, non-canonical ABC transporter that contains transmembrane domains (TMD), which form a pore in the inner membrane, and an ATP-binding domain (NBD), which is responsible for energy generation. Confers resistance against macrolides. The chain is Macrolide export ATP-binding/permease protein MacB from Agrobacterium fabrum (strain C58 / ATCC 33970) (Agrobacterium tumefaciens (strain C58)).